The chain runs to 654 residues: Bifunctional polymyxin resistance protein ArnA (654 aa).

The interval 1–303 (MKVIVFAYHE…NISRIKGKKL (303 aa)) is formyltransferase ArnAFT. The active-site Proton donor; for formyltransferase activity is the histidine 105. 137–141 (TKKID) contributes to the (6R)-10-formyltetrahydrofolate binding site. Residues 313-654 (NLKKILILGV…INFFINNNTS (342 aa)) are dehydrogenase ArnADH. NAD(+) is bound by residues aspartate 346 and 367 to 368 (DI). UDP-alpha-D-glucuronate-binding positions include alanine 392, tyrosine 397, and 431 to 432 (TS). Residue glutamate 433 is the Proton acceptor; for decarboxylase activity of the active site. UDP-alpha-D-glucuronate contacts are provided by residues arginine 459, asparagine 491, 532-534 (QKR), and tyrosine 612. Arginine 618 acts as the Proton donor; for decarboxylase activity in catalysis.

In the N-terminal section; belongs to the Fmt family. UDP-L-Ara4N formyltransferase subfamily. This sequence in the C-terminal section; belongs to the NAD(P)-dependent epimerase/dehydratase family. UDP-glucuronic acid decarboxylase subfamily. Homohexamer, formed by a dimer of trimers.

It catalyses the reaction UDP-alpha-D-glucuronate + NAD(+) = UDP-beta-L-threo-pentopyranos-4-ulose + CO2 + NADH. The catalysed reaction is UDP-4-amino-4-deoxy-beta-L-arabinose + (6R)-10-formyltetrahydrofolate = UDP-4-deoxy-4-formamido-beta-L-arabinose + (6S)-5,6,7,8-tetrahydrofolate + H(+). It functions in the pathway nucleotide-sugar biosynthesis; UDP-4-deoxy-4-formamido-beta-L-arabinose biosynthesis; UDP-4-deoxy-4-formamido-beta-L-arabinose from UDP-alpha-D-glucuronate: step 1/3. The protein operates within nucleotide-sugar biosynthesis; UDP-4-deoxy-4-formamido-beta-L-arabinose biosynthesis; UDP-4-deoxy-4-formamido-beta-L-arabinose from UDP-alpha-D-glucuronate: step 3/3. It participates in bacterial outer membrane biogenesis; lipopolysaccharide biosynthesis. Bifunctional enzyme that catalyzes the oxidative decarboxylation of UDP-glucuronic acid (UDP-GlcUA) to UDP-4-keto-arabinose (UDP-Ara4O) and the addition of a formyl group to UDP-4-amino-4-deoxy-L-arabinose (UDP-L-Ara4N) to form UDP-L-4-formamido-arabinose (UDP-L-Ara4FN). The modified arabinose is attached to lipid A and is required for resistance to polymyxin and cationic antimicrobial peptides. The chain is Bifunctional polymyxin resistance protein ArnA from Wigglesworthia glossinidia brevipalpis.